The following is a 107-amino-acid chain: uncharacterized protein (107 aa).

This is an uncharacterized protein from Autographa californica nuclear polyhedrosis virus (AcMNPV).